Here is a 403-residue protein sequence, read N- to C-terminus: Probable tRNA sulfurtransferase (403 aa).

Residues 60 to 165 (QLAEERLKPI…KEGVFLSCRT (106 aa)) enclose the THUMP domain. Residues 183-184 (ML), 208-209 (HF), arginine 265, glycine 287, and glutamine 296 each bind ATP.

Belongs to the ThiI family.

The protein resides in the cytoplasm. The catalysed reaction is [ThiI sulfur-carrier protein]-S-sulfanyl-L-cysteine + a uridine in tRNA + 2 reduced [2Fe-2S]-[ferredoxin] + ATP + H(+) = [ThiI sulfur-carrier protein]-L-cysteine + a 4-thiouridine in tRNA + 2 oxidized [2Fe-2S]-[ferredoxin] + AMP + diphosphate. It catalyses the reaction [ThiS sulfur-carrier protein]-C-terminal Gly-Gly-AMP + S-sulfanyl-L-cysteinyl-[cysteine desulfurase] + AH2 = [ThiS sulfur-carrier protein]-C-terminal-Gly-aminoethanethioate + L-cysteinyl-[cysteine desulfurase] + A + AMP + 2 H(+). The protein operates within cofactor biosynthesis; thiamine diphosphate biosynthesis. In terms of biological role, catalyzes the ATP-dependent transfer of a sulfur to tRNA to produce 4-thiouridine in position 8 of tRNAs, which functions as a near-UV photosensor. Also catalyzes the transfer of sulfur to the sulfur carrier protein ThiS, forming ThiS-thiocarboxylate. This is a step in the synthesis of thiazole, in the thiamine biosynthesis pathway. The sulfur is donated as persulfide by IscS. This chain is Probable tRNA sulfurtransferase, found in Listeria innocua serovar 6a (strain ATCC BAA-680 / CLIP 11262).